The following is a 315-amino-acid chain: N-acetyl-gamma-glutamyl-phosphate reductase (315 aa).

C117 is a catalytic residue.

It belongs to the NAGSA dehydrogenase family. Type 2 subfamily.

It localises to the cytoplasm. It carries out the reaction N-acetyl-L-glutamate 5-semialdehyde + phosphate + NADP(+) = N-acetyl-L-glutamyl 5-phosphate + NADPH + H(+). The protein operates within amino-acid biosynthesis; L-arginine biosynthesis; N(2)-acetyl-L-ornithine from L-glutamate: step 3/4. Its function is as follows. Catalyzes the NADPH-dependent reduction of N-acetyl-5-glutamyl phosphate to yield N-acetyl-L-glutamate 5-semialdehyde. The protein is N-acetyl-gamma-glutamyl-phosphate reductase of Burkholderia lata (strain ATCC 17760 / DSM 23089 / LMG 22485 / NCIMB 9086 / R18194 / 383).